A 442-amino-acid chain; its full sequence is Proline--tRNA ligase (442 aa).

This sequence belongs to the class-II aminoacyl-tRNA synthetase family. ProS type 2 subfamily. Homodimer.

It localises to the cytoplasm. The enzyme catalyses tRNA(Pro) + L-proline + ATP = L-prolyl-tRNA(Pro) + AMP + diphosphate. Catalyzes the attachment of proline to tRNA(Pro) in a two-step reaction: proline is first activated by ATP to form Pro-AMP and then transferred to the acceptor end of tRNA(Pro). This is Proline--tRNA ligase from Brucella ovis (strain ATCC 25840 / 63/290 / NCTC 10512).